We begin with the raw amino-acid sequence, 189 residues long: Guanylate kinase (189 aa).

In terms of domain architecture, Guanylate kinase-like spans 8-186 (GKLTVITGPS…AVIELESLMG (179 aa)). 15–22 (GPSGVGKG) lines the ATP pocket.

The protein belongs to the guanylate kinase family.

It is found in the cytoplasm. It carries out the reaction GMP + ATP = GDP + ADP. Essential for recycling GMP and indirectly, cGMP. The protein is Guanylate kinase of Prochlorococcus marinus (strain MIT 9313).